Consider the following 209-residue polypeptide: Glycerol-3-phosphate acyltransferase (209 aa).

Transmembrane regions (helical) follow at residues 13 to 33 (ALIA…GLLL), 63 to 83 (LAAA…LIAQ), 94 to 114 (PGLL…WLGF), 127 to 147 (LLGI…SIAF), and 151 to 171 (YSSL…WILG).

This sequence belongs to the PlsY family. As to quaternary structure, probably interacts with PlsX.

The protein resides in the cell inner membrane. The catalysed reaction is an acyl phosphate + sn-glycerol 3-phosphate = a 1-acyl-sn-glycero-3-phosphate + phosphate. It participates in lipid metabolism; phospholipid metabolism. Functionally, catalyzes the transfer of an acyl group from acyl-phosphate (acyl-PO(4)) to glycerol-3-phosphate (G3P) to form lysophosphatidic acid (LPA). This enzyme utilizes acyl-phosphate as fatty acyl donor, but not acyl-CoA or acyl-ACP. This is Glycerol-3-phosphate acyltransferase from Allorhizobium ampelinum (strain ATCC BAA-846 / DSM 112012 / S4) (Agrobacterium vitis (strain S4)).